The primary structure comprises 276 residues: Short-chain dehydrogenase/reductase ATR10 (276 aa).

I29, S51, D78, and N105 together coordinate NADP(+). The active-site Proton donor is S161. K185 and T214 together coordinate NADP(+). Catalysis depends on K185, which acts as the Lowers pKa of active site Tyr.

Belongs to the short-chain dehydrogenases/reductases (SDR) family.

The protein operates within mycotoxin biosynthesis. Short-chain dehydrogenase/reductase; part of the core atranone cluster (CAC) which products are predicted to catalyze most or all steps of mycotoxin atranone synthesis, starting from geranylgeranyl pyrophosphate (GGPP). The initial cyclization of GGPP to dolabellane is probably performed by the terpene cyclase ATR13. The Baeyer-Villiger oxidation near the end of the atranone synthesis, which converts atranones D and E to atranones F and G is predicted to be catalyzed by the monooxygenase ATR8. Of the CAC's other predicted gene products, the reducing PKS ATR6 might synthesize a polyketide chain. This polyketide is probably transferred onto the atranone backbone by the polyketide transferase ATR5. Other predicted CAC products include 4 oxygenases (ATR2, ATR3, ATR4, and ATR14), 3 short-chain reductases (ATR7, ATR9, and ATR10), and a methyltransferase (ATR12). These may all be involved in the various steps of atranone biosynthesis, although their specific roles must await experimental determination. This Stachybotrys chlorohalonatus (strain IBT 40285) protein is Short-chain dehydrogenase/reductase ATR10.